Reading from the N-terminus, the 829-residue chain is Protein SEY1 (829 aa).

Residues 1-721 lie on the Cytoplasmic side of the membrane; the sequence is MNQTPQIAQD…KRSMVSSVAQ (721 aa). Positions 87–310 constitute a GB1/RHD3-type G domain; that stretch reads GFAYDVVAVF…REDYVFQPAY (224 aa). Residue 97–104 participates in GTP binding; that stretch reads GSQSTGKS. Residues 487–525 adopt a coiled-coil conformation; the sequence is EYEHELALLDEDLKLIADKCRADETKKMVNAIERNVKRQ. Residues 722-742 traverse the membrane as a helical segment; the sequence is IPVWMYGVLVVLGWNEAMAVL. Residues 743–745 lie on the Lumenal side of the membrane; sequence FNP. Residues 746-766 traverse the membrane as a helical segment; sequence LYFAMLLVLAASGYIILQLGL. Over 767-829 the chain is Cytoplasmic; sequence AGPILQIAST…DLIKGEMLEK (63 aa). The segment at 806–829 is disordered; it reads PVTASSSDEQERKGDLIKGEMLEK. Residues 814-829 are compositionally biased toward basic and acidic residues; the sequence is EQERKGDLIKGEMLEK.

Belongs to the TRAFAC class dynamin-like GTPase superfamily. GB1/RHD3 GTPase family. RHD3 subfamily.

The protein resides in the endoplasmic reticulum membrane. In terms of biological role, cooperates with the reticulon proteins and tubule-shaping DP1 family proteins to generate and maintain the structure of the tubular endoplasmic reticulum network. Has GTPase activity, which is required for its function in ER organization. In Cryptococcus neoformans var. neoformans serotype D (strain B-3501A) (Filobasidiella neoformans), this protein is Protein SEY1.